The chain runs to 92 residues: Small ribosomal subunit protein uS19c (92 aa).

Belongs to the universal ribosomal protein uS19 family.

Its subcellular location is the plastid. It localises to the chloroplast. Protein S19 forms a complex with S13 that binds strongly to the 16S ribosomal RNA. In Liriodendron tulipifera (Tuliptree), this protein is Small ribosomal subunit protein uS19c.